We begin with the raw amino-acid sequence, 873 residues long: Bifunctional uridylyltransferase/uridylyl-removing enzyme (873 aa).

The segment at 1 to 332 (MAFQSPLTFN…NGGETEPAVI (332 aa)) is uridylyltransferase. A uridylyl-removing region spans residues 333 to 692 (INEDFQRRGR…MSKKATRGGT (360 aa)). One can recognise an HD domain in the interval 451–573 (VDEHSVRLLN…VRDEERLEYL (123 aa)). ACT domains are found at residues 693 to 773 (EVFV…VKTR) and 800 to 873 (LMEL…ELAP).

Belongs to the GlnD family. Mg(2+) is required as a cofactor.

It carries out the reaction [protein-PII]-L-tyrosine + UTP = [protein-PII]-uridylyl-L-tyrosine + diphosphate. It catalyses the reaction [protein-PII]-uridylyl-L-tyrosine + H2O = [protein-PII]-L-tyrosine + UMP + H(+). Its activity is regulated as follows. Uridylyltransferase (UTase) activity is inhibited by glutamine, while glutamine activates uridylyl-removing (UR) activity. In terms of biological role, modifies, by uridylylation and deuridylylation, the PII regulatory proteins (GlnB and homologs), in response to the nitrogen status of the cell that GlnD senses through the glutamine level. Under low glutamine levels, catalyzes the conversion of the PII proteins and UTP to PII-UMP and PPi, while under higher glutamine levels, GlnD hydrolyzes PII-UMP to PII and UMP (deuridylylation). Thus, controls uridylylation state and activity of the PII proteins, and plays an important role in the regulation of nitrogen assimilation and metabolism. In Vibrio vulnificus (strain YJ016), this protein is Bifunctional uridylyltransferase/uridylyl-removing enzyme.